Reading from the N-terminus, the 524-residue chain is ORC1-type DNA replication protein 4 (524 aa).

Polar residues predominate over residues 1 to 23 (MTDKSNNPAPASDPSTTETSNDA). Positions 1 to 67 (MTDKSNNPAP…DDPSDEASRG (67 aa)) are disordered. Residues 128 to 132 (TGKTA), tyrosine 325, and arginine 337 each bind ATP.

The protein belongs to the CDC6/cdc18 family.

Its function is as follows. Involved in regulation of DNA replication. The chain is ORC1-type DNA replication protein 4 (cdc6d) from Haloarcula marismortui (strain ATCC 43049 / DSM 3752 / JCM 8966 / VKM B-1809) (Halobacterium marismortui).